The chain runs to 298 residues: GTPase Era (298 aa).

The Era-type G domain maps to 8-176; that stretch reads RCGRIAVIGR…VSDLLALLPE (169 aa). The interval 16 to 23 is G1; it reads GRPNVGKS. Residue 16-23 participates in GTP binding; sequence GRPNVGKS. The segment at 42 to 46 is G2; sequence QTTRH. The G3 stretch occupies residues 63–66; it reads DTPG. Residues 63-67 and 125-128 each bind GTP; these read DTPGL and NKID. The tract at residues 125–128 is G4; that stretch reads NKID. The G5 stretch occupies residues 155–157; sequence VSA. The region spanning 199 to 283 is the KH type-2 domain; it reads VREQVMRQLG…FLETWVRVRK (85 aa).

This sequence belongs to the TRAFAC class TrmE-Era-EngA-EngB-Septin-like GTPase superfamily. Era GTPase family. As to quaternary structure, monomer.

Its subcellular location is the cytoplasm. It is found in the cell inner membrane. Its function is as follows. An essential GTPase that binds both GDP and GTP, with rapid nucleotide exchange. Plays a role in 16S rRNA processing and 30S ribosomal subunit biogenesis and possibly also in cell cycle regulation and energy metabolism. This Xylella fastidiosa (strain Temecula1 / ATCC 700964) protein is GTPase Era.